Here is a 105-residue protein sequence, read N- to C-terminus: UPF0145 protein GK1405 (105 aa).

Belongs to the UPF0145 family.

This is UPF0145 protein GK1405 from Geobacillus kaustophilus (strain HTA426).